A 344-amino-acid chain; its full sequence is Fructose-1,6-bisphosphatase class 1 (344 aa).

Positions 90, 109, 111, and 112 each coordinate Mg(2+). Substrate is bound by residues 112–115 and asparagine 200; that span reads DGSS. Glutamate 271 lines the Mg(2+) pocket.

Belongs to the FBPase class 1 family. In terms of assembly, homotetramer. Mg(2+) serves as cofactor.

The protein resides in the cytoplasm. The catalysed reaction is beta-D-fructose 1,6-bisphosphate + H2O = beta-D-fructose 6-phosphate + phosphate. It functions in the pathway carbohydrate biosynthesis; gluconeogenesis. This Nitrobacter vulgaris protein is Fructose-1,6-bisphosphatase class 1.